A 168-amino-acid polypeptide reads, in one-letter code: Ribosome maturation factor RimM (168 aa).

Residues 95-166 (EHEFYYSDII…RIQITPMEGL (72 aa)) form the PRC barrel domain.

This sequence belongs to the RimM family. Binds ribosomal protein uS19.

It localises to the cytoplasm. An accessory protein needed during the final step in the assembly of 30S ribosomal subunit, possibly for assembly of the head region. Essential for efficient processing of 16S rRNA. May be needed both before and after RbfA during the maturation of 16S rRNA. It has affinity for free ribosomal 30S subunits but not for 70S ribosomes. The sequence is that of Ribosome maturation factor RimM from Staphylococcus saprophyticus subsp. saprophyticus (strain ATCC 15305 / DSM 20229 / NCIMB 8711 / NCTC 7292 / S-41).